The chain runs to 348 residues: Uroporphyrinogen decarboxylase (348 aa).

Residues 28–32 (RQAGR), aspartate 78, tyrosine 154, threonine 209, and histidine 325 contribute to the substrate site.

Belongs to the uroporphyrinogen decarboxylase family. As to quaternary structure, homodimer.

It is found in the cytoplasm. It carries out the reaction uroporphyrinogen III + 4 H(+) = coproporphyrinogen III + 4 CO2. It participates in porphyrin-containing compound metabolism; protoporphyrin-IX biosynthesis; coproporphyrinogen-III from 5-aminolevulinate: step 4/4. Catalyzes the decarboxylation of four acetate groups of uroporphyrinogen-III to yield coproporphyrinogen-III. The polypeptide is Uroporphyrinogen decarboxylase (Rhodopseudomonas palustris (strain HaA2)).